A 350-amino-acid polypeptide reads, in one-letter code: Protein RecA (350 aa).

67 to 74 (GPESSGKT) is an ATP binding site.

This sequence belongs to the RecA family.

Its subcellular location is the cytoplasm. Its function is as follows. Can catalyze the hydrolysis of ATP in the presence of single-stranded DNA, the ATP-dependent uptake of single-stranded DNA by duplex DNA, and the ATP-dependent hybridization of homologous single-stranded DNAs. It interacts with LexA causing its activation and leading to its autocatalytic cleavage. The sequence is that of Protein RecA from Baumannia cicadellinicola subsp. Homalodisca coagulata.